The chain runs to 501 residues: Aminoaldehyde dehydrogenase ALDH10A8, chloroplastic (501 aa).

Residues aspartate 99 and leucine 189 each coordinate Na(+). Residues 238 to 243 (GSFATG) and 238 to 245 (GSFATGSK) contribute to the NAD(+) site. Glutamate 260 functions as the Proton acceptor in the catalytic mechanism. NAD(+) contacts are provided by cysteine 294 and glutamate 393. Catalysis depends on cysteine 294, which acts as the Nucleophile.

The protein belongs to the aldehyde dehydrogenase family. In terms of assembly, homodimer. In terms of tissue distribution, widely expressed.

The protein resides in the cytoplasm. The protein localises to the plastid. It is found in the chloroplast. It carries out the reaction 4-aminobutanal + NAD(+) + H2O = 4-aminobutanoate + NADH + 2 H(+). The enzyme catalyses 3-aminopropanal + NAD(+) + H2O = beta-alanine + NADH + 2 H(+). It catalyses the reaction 4-(trimethylamino)butanal + NAD(+) + H2O = 4-(trimethylamino)butanoate + NADH + 2 H(+). The catalysed reaction is 4-guanidinobutanal + NAD(+) + H2O = 4-guanidinobutanoate + NADH + 2 H(+). It carries out the reaction betaine aldehyde + NAD(+) + H2O = glycine betaine + NADH + 2 H(+). The protein operates within amine and polyamine biosynthesis; betaine biosynthesis via choline pathway; betaine from betaine aldehyde: step 1/1. Functionally, dehydrogenase that catalyzes the oxidation of several aminoaldehydes. Metabolizes and detoxifies aldehyde products of polyamine degradation to non-toxic amino acids. Catalyzes the oxidation of 4-aminobutanal and 3-aminopropanal to 4-aminobutanoate and beta-alanine, respectively. Production of 4-aminobutinoate by ALDH10A8 may confer tolerance to salt stress. Catalyzes the oxidation of 4-(trimethylamino)butanal and 4-guanidinobutanal to 4-trimethylammoniobutanoate and 4-guanidinobutanoate, respectively. Involved in glycine betaine biosynthesis. Catalyzes with low efficiency the oxidation of betaine aldehyde to glycine betaine. The sequence is that of Aminoaldehyde dehydrogenase ALDH10A8, chloroplastic from Arabidopsis thaliana (Mouse-ear cress).